A 38-amino-acid chain; its full sequence is Large ribosomal subunit protein bL36A (38 aa).

Belongs to the bacterial ribosomal protein bL36 family.

The polypeptide is Large ribosomal subunit protein bL36A (Cronobacter sakazakii (strain ATCC BAA-894) (Enterobacter sakazakii)).